A 470-amino-acid polypeptide reads, in one-letter code: ATP synthase subunit beta (470 aa).

155–162 is a binding site for ATP; it reads GGAGVGKT.

It belongs to the ATPase alpha/beta chains family. F-type ATPases have 2 components, CF(1) - the catalytic core - and CF(0) - the membrane proton channel. CF(1) has five subunits: alpha(3), beta(3), gamma(1), delta(1), epsilon(1). CF(0) has three main subunits: a(1), b(2) and c(9-12). The alpha and beta chains form an alternating ring which encloses part of the gamma chain. CF(1) is attached to CF(0) by a central stalk formed by the gamma and epsilon chains, while a peripheral stalk is formed by the delta and b chains.

The protein resides in the cell membrane. The catalysed reaction is ATP + H2O + 4 H(+)(in) = ADP + phosphate + 5 H(+)(out). Produces ATP from ADP in the presence of a proton gradient across the membrane. The catalytic sites are hosted primarily by the beta subunits. This is ATP synthase subunit beta from Staphylococcus aureus (strain MW2).